The sequence spans 454 residues: UDP-N-acetylmuramate--L-alanine ligase (454 aa).

Residue 109 to 115 participates in ATP binding; that stretch reads GTHGKTT.

The protein belongs to the MurCDEF family.

The protein localises to the cytoplasm. It catalyses the reaction UDP-N-acetyl-alpha-D-muramate + L-alanine + ATP = UDP-N-acetyl-alpha-D-muramoyl-L-alanine + ADP + phosphate + H(+). It participates in cell wall biogenesis; peptidoglycan biosynthesis. Its function is as follows. Cell wall formation. The chain is UDP-N-acetylmuramate--L-alanine ligase from Protochlamydia amoebophila (strain UWE25).